The following is a 627-amino-acid chain: 1-deoxy-D-xylulose-5-phosphate synthase (627 aa).

Thiamine diphosphate is bound by residues His-80 and 121–123; that span reads GHS. Asp-152 lines the Mg(2+) pocket. Thiamine diphosphate is bound by residues 153–154, Asn-181, Tyr-288, and Glu-370; that span reads GA. Residue Asn-181 participates in Mg(2+) binding.

The protein belongs to the transketolase family. DXPS subfamily. Homodimer. The cofactor is Mg(2+). Thiamine diphosphate serves as cofactor.

It catalyses the reaction D-glyceraldehyde 3-phosphate + pyruvate + H(+) = 1-deoxy-D-xylulose 5-phosphate + CO2. It functions in the pathway metabolic intermediate biosynthesis; 1-deoxy-D-xylulose 5-phosphate biosynthesis; 1-deoxy-D-xylulose 5-phosphate from D-glyceraldehyde 3-phosphate and pyruvate: step 1/1. In terms of biological role, catalyzes the acyloin condensation reaction between C atoms 2 and 3 of pyruvate and glyceraldehyde 3-phosphate to yield 1-deoxy-D-xylulose-5-phosphate (DXP). The protein is 1-deoxy-D-xylulose-5-phosphate synthase of Aliivibrio fischeri (strain MJ11) (Vibrio fischeri).